Consider the following 160-residue polypeptide: Ribosomal RNA large subunit methyltransferase H (160 aa).

S-adenosyl-L-methionine-binding positions include Gly108 and 127 to 132 (FGKMTW).

It belongs to the RNA methyltransferase RlmH family. Homodimer.

It localises to the cytoplasm. The enzyme catalyses pseudouridine(1915) in 23S rRNA + S-adenosyl-L-methionine = N(3)-methylpseudouridine(1915) in 23S rRNA + S-adenosyl-L-homocysteine + H(+). Functionally, specifically methylates the pseudouridine at position 1915 (m3Psi1915) in 23S rRNA. The chain is Ribosomal RNA large subunit methyltransferase H from Beijerinckia indica subsp. indica (strain ATCC 9039 / DSM 1715 / NCIMB 8712).